We begin with the raw amino-acid sequence, 2760 residues long: A-kinase anchor protein 13 (2760 aa).

Disordered regions lie at residues 356-388 (CSHKKNKDTGRPGEGVEPASAVDSRSASHQDSC), 442-517 (PDAR…EPKQ), 530-577 (AAGA…VLPA), 604-711 (SSLD…AAHN), 729-857 (EKDL…EQEG), 890-940 (GGSI…QEIS), 954-1029 (EKAL…ASEA), and 1132-1162 (EGTDLSCPTSKSKETPNNEETTQPPARDLPT). The span at 378 to 388 (DSRSASHQDSC) shows a compositional bias: polar residues. Positions 442 to 454 (PDARQHSSGRELP) are enriched in basic and acidic residues. An important for interaction with PRKAR2A region spans residues 482-504 (QNSKPQVGESAKERLENSDISSA). The span at 530 to 547 (AAGADAPAEASPAWSPEE) shows a compositional bias: low complexity. 3 stretches are compositionally biased toward polar residues: residues 620–638 (KQNSESSAQHAQSLNSQAP), 654–664 (CPQSTETSSGG), and 701–711 (DTVTSDTAAHN). Residues 769–780 (SSFSLASSPESE) are compositionally biased toward low complexity. Ser776 is modified (phosphoserine). Phosphothreonine is present on Thr801. Positions 814–826 (PDGRDLNDTDKVG) are enriched in basic and acidic residues. The span at 839–849 (ELQTSMGNTSP) shows a compositional bias: polar residues. Over residues 906–931 (GKDKATKCPSVKEDVHSSEMSREDQR) the composition is skewed to basic and acidic residues. A Phosphothreonine modification is found at Thr932. 2 stretches are compositionally biased toward polar residues: residues 958-972 (QHSNSPDTPSACLQT) and 1001-1020 (TSLSADSEQKTSSTEQSGSS). Residue Ser962 is modified to Phosphoserine. The interval 1213 to 1228 (SIEETATRIVEAVIKQ) is important for interaction with PRKAR2A. 3 disordered regions span residues 1392–1411 (GVLQRESGSDSDLFHSPSDE), 1425–1508 (LLCD…VPAN), and 1520–1539 (SPFRRHSWGPGKNAASDAEM). A compositionally biased stretch (low complexity) spans 1428 to 1439 (DTTGSSSSTDDT). The span at 1449-1472 (GSDVSLPQTSKLNRSRNHQSSNGF) shows a compositional bias: polar residues. Ser1450, Ser1468, Ser1501, Ser1526, and Ser1585 each carry phosphoserine. An important for interaction with MAP2K3 region spans residues 1546–1695 (QVLGHVVRRP…SRPFHSASAN (150 aa)). A disordered region spans residues 1592 to 1628 (GGGVGNKPSSSLEISSANSSELRNPFSGEEQRSSLMS). The segment covering 1600–1611 (SSSLEISSANSS) has biased composition (low complexity). Phosphoserine is present on residues Ser1625, Ser1628, and Ser1630. Lys1654 is modified (N6-methyllysine). The interval 1733–1755 (RNKMSSSKKSKKEKDKKTLNGHT) is disordered. Residues 1753–1800 (GHTFSPIPIVGPINCSQCMKPFTNKDAYTCASCGAFVHKGCRENLASC) form a Phorbol-ester/DAG-type zinc finger. A phosphoserine mark is found at Ser1838, Ser1857, and Ser1891. The tract at residues 1881–2760 (MSNTWKFLSH…VPAEGEEIFC (880 aa)) is interaction with ESR1. Thr1892 is modified (phosphothreonine). Phosphoserine occurs at positions 1894 and 1907. In terms of domain architecture, DH spans 1956 to 2153 (KRQEVIYELM…KDVIGAVDSK (198 aa)). Positions 2176-2280 (MRMKSGQMFA…WIQIIQDTIN (105 aa)) constitute a PH domain. Phosphoserine is present on residues Ser2292 and Ser2345. Residues 2292-2329 (SENEEEKRLLDTKARELKEQLQQKDQQILLLLEEKEMI) are a coiled coil. Thr2415 is modified (phosphothreonine). The tract at residues 2422 to 2450 (HQLNASKGGEKEEGDDGQDLRRTESDSGL) is disordered. A compositionally biased stretch (basic and acidic residues) spans 2439–2450 (QDLRRTESDSGL). Phosphoserine occurs at positions 2511 and 2514. Positions 2516–2632 (LIEQEKQRSL…LSQRQMEQDL (117 aa)) form a coiled coil. Disordered regions lie at residues 2568 to 2588 (AEREETVRRRQQDLERDREEL) and 2660 to 2760 (TPSI…EIFC). Composition is skewed to polar residues over residues 2660–2684 (TPSITKSGSLDSELSVSPKRNSISR) and 2696–2711 (SSASQTKVPEGQSQAP). Ser2676 bears the Phosphoserine mark. Positions 2743 to 2752 (PGDGPAPEVP) are enriched in low complexity.

As to quaternary structure, interacts with the cAMP-dependent protein kinase (PKA) holoenzyme and with the regulatory subunit PRKAR2A. Interacts with RHOA. Also interacts with RHOB and RHOC. Identified in a ternary complex with RHOA and PRKAR2A. Identified in a complex with NR3C1 and RHOA. Interacts with BRAF and KSR1. Identified in a complex with BRAF and KSR1. Component of a signaling complex containing at least AKAP13, PKN1, MAPK14, ZAK and MAP2K3. Within this complex, AKAP13 interacts directly with PKN1, which in turn recruits MAPK14, MAP2K3 and ZAK. Interacts (phosphorylated form) with YWHAB and YWHAZ. Interaction with YWHAB inhibits activation of RHOA, interferes with PKN1 binding and activation of MAP kinases. Interacts with GNA12. Interacts with IKBKB. Interacts with ESR1, THRA, PPARA and NME2. Interacts (via the C-terminal domain after the PH domain) with MEF2C and RXRB. Interacts (via the C-terminal domain after the PH domain) with PRKD1. In terms of tissue distribution, detected in bone osteoblasts (at protein level).

The protein localises to the cytoplasm. Its subcellular location is the cytosol. The protein resides in the cell cortex. It is found in the nucleus. It localises to the membrane. Functionally, scaffold protein that plays an important role in assembling signaling complexes downstream of several types of G protein-coupled receptors. Activates RHOA in response to signaling via G protein-coupled receptors via its function as Rho guanine nucleotide exchange factor. May also activate other Rho family members. Part of a kinase signaling complex that links ADRA1A and ADRA1B adrenergic receptor signaling to the activation of downstream p38 MAP kinases, such as MAPK11 and MAPK14. Part of a signaling complex that links ADRA1B signaling to the activation of RHOA and IKBKB/IKKB, leading to increased NF-kappa-B transcriptional activity. Part of a RHOA-dependent signaling cascade that mediates responses to lysophosphatidic acid (LPA), a signaling molecule that activates G-protein coupled receptors and potentiates transcriptional activation of the glucocorticoid receptor NR3C1. Part of a signaling cascade that stimulates MEF2C-dependent gene expression in response to lysophosphatidic acid (LPA). Part of a signaling pathway that activates MAPK11 and/or MAPK14 and leads to increased transcription activation of the estrogen receptors ESR1 and ESR2. Part of a signaling cascade that links cAMP and EGFR signaling to BRAF signaling and to PKA-mediated phosphorylation of KSR1, leading to the activation of downstream MAP kinases, such as MAPK1 or MAPK3. Functions as a scaffold protein that anchors cAMP-dependent protein kinase (PKA) and PRKD1. This promotes activation of PRKD1, leading to increased phosphorylation of HDAC5 and ultimately cardiomyocyte hypertrophy. Has no guanine nucleotide exchange activity on CDC42, Ras or Rac. Required for normal embryonic heart development, and in particular for normal sarcomere formation in the developing cardiomyocytes. Plays a role in cardiomyocyte growth and cardiac hypertrophy in response to activation of the beta-adrenergic receptor by phenylephrine or isoproterenol. Required for normal adaptive cardiac hypertrophy in response to pressure overload. Plays a role in osteogenesis. The chain is A-kinase anchor protein 13 from Rattus norvegicus (Rat).